A 286-amino-acid chain; its full sequence is Protein Bride of doubletime (286 aa).

In terms of assembly, interacts with dco (via nuclear localization signal). Interacts with Ankrd49; interaction promotes the stability of both complex members.

The protein localises to the cytoplasm. It localises to the cytosol. It is found in the cell membrane. In terms of biological role, functions in planar polarity establishment and circadian rhythms by promoting the activity and localization of dco/dbt. Required for regulating the levels of dco/dbt and per in the nuclei of photoreceptor cells and thereby is involved in normal oscillations of the circadian clock proteins in the eye. In the dark, the cry circadian and rhodopsin visual pathways, activate the accumulation of the protein into Arr1- and Arr2-dependent cytosolic foci which are required for dco localization to photoreceptor nuclei. It is possible that the accumulation into foci results in the dissociation of the protein from dco, thus allowing dco to interact with importins and microtubles for nuclear transport. By promoting nuclei localization and kinase activity of dco towards per, it is essential for regulating normal cycles of per nuclear accumulation in brain circadian neurons and thus is important for normal circadian behavior. Essential for regulating the establishment of planar cell polarity in the wing. Forms a complex with Ankrd49 which likely functions in the regulation of planar polarity by promoting the activity of dco during planar polarity establishment. Within the complex, directly promotes dco activity in regulating phosphorylation and asymmetric localization of core planar polarity proteins such as dsh. This chain is Protein Bride of doubletime, found in Drosophila melanogaster (Fruit fly).